An 832-amino-acid polypeptide reads, in one-letter code: MEGDGGTPWALALLRTFDAGEFTGWEKVGSGGFGQVYKVRHVHWKTWLAIKCSPSLHVDDRERMELLEEAKKMEMAKFRYILPVYGICREPVGLVMEYMETGSLEKLLASEPLPWDLRFRIIHETAVGMNFLHCMAPPLLHLDLKPANILLDAHYHVKISDFGLAKCNGLSHSHDLSMDGLFGTIAYLPPERIREKSRLFDTKHDVYSFAIVIWGVLTQKKPFADEKNILHIMVKVVKGHRPELPPVCRARPRACSHLIRLMQRCWQGDPRVRPTFQGNGLNGELIRQVLAALLPVTGRWRSPGEGFRLESEVIIRVTCPLSSPQEITSETEDLCEKPDDEVKETAHDLDVKSPPEPRSEVVPARLKRASAPTFDNDYSLSELLSQLDSGVSQAVEGPEELSRSSSESKLPSSGSGKRLSGVSSVDSAFSSRGSLSLSFEREPSTSDLGTTDVQKKKLVDAIVSGDTSKLMKILQPQDVDLALDSGASLLHLAVEAGQEECAKWLLLNNANPNLSNRRGSTPLHMAVERRVRGVVELLLARKISVNAKDEDQWTALHFAAQNGDESSTRLLLEKNASVNEVDFEGRTPMHVACQHGQENIVRILLRRGVDVSLQGKDAWLPLHYAAWQGHLPIVKLLAKQPGVSVNAQTLDGRTPLHLAAQRGHYRVARILIDLCSDVNVCSLLAQTPLHVAAETGHTSTARLLLHRGAGKEAMTSDGYTALHLAARNGHLATVKLLVEEKADVLARGPLNQTALHLAAAHGHSEVVEELVSADVIDLFDEQGLSALHLAAQGRHAQTVETLLRHGAHINLQSLKFQGGHGPAATLLRRSKT.

The region spanning 22–286 is the Protein kinase domain; sequence FTGWEKVGSG…QGNGLNGELI (265 aa). ATP-binding positions include 28–36 and lysine 51; that span reads VGSGGFGQV. Residue lysine 51 forms a Glycyl lysine isopeptide (Lys-Gly) (interchain with G-Cter in ubiquitin) linkage. Catalysis depends on aspartate 143, which acts as the Proton acceptor. Lysine 145 is covalently cross-linked (Glycyl lysine isopeptide (Lys-Gly) (interchain with G-Cter in ubiquitin)). Disordered regions lie at residues 325-368 and 389-424; these read QEIT…RLKR and SGVS…GVSS. A compositionally biased stretch (acidic residues) spans 329–342; the sequence is SETEDLCEKPDDEV. Basic and acidic residues predominate over residues 343–359; the sequence is KETAHDLDVKSPPEPRS. Residues 403-424 are compositionally biased toward low complexity; that stretch reads RSSSESKLPSSGSGKRLSGVSS. 10 ANK repeats span residues 485 to 514, 518 to 547, 551 to 580, 584 to 613, 617 to 647, 651 to 680, 684 to 713, 717 to 746, 750 to 780, and 782 to 811; these read SGAS…NPNL, RGST…SVNA, DQWT…SVNE, EGRT…DVSL, DAWL…SVNA, DGRT…DVNV, LAQT…GKEA, DGYT…DVLA, LNQT…DLFD, and QGLS…HINL.

Belongs to the protein kinase superfamily. TKL Ser/Thr protein kinase family. In terms of assembly, interacts with PRKCB. Interacts with TRAF1, TRAF2, TRAF3 and TRAF5. Interacts with BIRC2/c-IAP1, BIRC3/c-IAP2 and XIAP/BIRC4. May be phosphorylated by MAP3K2 and MAP3K3. Post-translationally, proteolytically cleaved by during Fas-induced apoptosis. Cleavage at Asp-388 and Asp-426. In terms of processing, polyubiquitinated with 'Lys-48' and 'Lys-63'-linked chains by BIRC2/c-IAP1 and BIRC3/c-IAP2, leading to activation of NF-kappa-B. As to expression, expressed in hair follicles and skin.

It localises to the cytoplasm. Its subcellular location is the membrane. It carries out the reaction L-seryl-[protein] + ATP = O-phospho-L-seryl-[protein] + ADP + H(+). It catalyses the reaction L-threonyl-[protein] + ATP = O-phospho-L-threonyl-[protein] + ADP + H(+). Functionally, serine/threonine protein kinase. Required for embryonic skin development and correct skin homeostasis in adults, via phosphorylation of PKP1 and subsequent promotion of keratinocyte differentiation and cell adhesion. It is a direct transcriptional target of TP63. Plays a role in NF-kappa-B activation. The protein is Receptor-interacting serine/threonine-protein kinase 4 (RIPK4) of Homo sapiens (Human).